We begin with the raw amino-acid sequence, 772 residues long: Delta-like protein A (772 aa).

Positions 1-20 (MGRHLLLLLFSILYMLLCQA) are cleaved as a signal peptide. Topologically, residues 21–536 (SSSGVFELKL…SQIASDVPWT (516 aa)) are extracellular. A DSL domain is found at 179 to 223 (FVCDEHYYGEGCSVFCRPRDDAFGHFTCGERGEIICDAGWKGQYC). 26 cysteine pairs are disulfide-bonded: C181–C190, C194–C206, C214–C223, C228–C239, C232–C245, C259–C270, C265–C276, C278–C287, C294–C306, C300–C316, C318–C327, C334–C345, C339–C354, C356–C365, C372–C383, C377–C393, C395–C404, C411–C422, C416–C431, C433–C442, C449–C460, C454–C469, C471–C480, C487–C498, C492–C507, and C509–C518. EGF-like domains lie at 225–257 (EPICLPGCDEEHGFCEKPGECKCRVGFKGRYCD), 257–288 (DECIRYPGCLHGTCQQPWQCNCQEGWGGLFCN), and 290–328 (DLNYCTHHKPCLNGATCSNTGQGSYTCSCRPGFSGASCE). In terms of domain architecture, EGF-like 4; calcium-binding spans 330 to 366 (EVNECTGNPCRNGGSCTDMENTYSCTCPPGFYGKNCE). EGF-like domains lie at 368-405 (SAMTCADGPCFNGGRCADNPDGGYFCQCPTGYAGFNCE), 407-443 (KIDHCSSSPCSNGARCVDLVNSYLCQCPDGFTGMNCD), 445-481 (AGDECSMYPCQNGGTCQEGASGYMCTCPPGYTGRNCS), and 483-519 (PVSRCQHNPCHNGATCHERNNRYVCACVSGYGGRNCQ). N-linked (GlcNAc...) asparagine glycosylation is present at N479. The chain crosses the membrane as a helical span at residues 537–557 (AVGSGVLLVLLLVVACAVVVV). At 558–772 (CVRSKVQQRR…KDECVIATEV (215 aa)) the chain is on the cytoplasmic side. The tract at residues 688–722 (EEKRRKRLKSDASEKSKYSESRYSESKYSESKYSE) is disordered. Residues 696–722 (KSDASEKSKYSESRYSESKYSESKYSE) are compositionally biased toward basic and acidic residues.

Interacts with mib. Post-translationally, ubiquitinated by mib, leading to its endocytosis and subsequent degradation. Ubiquitinated by the ECS(ASB11) complex, leading to its degradation by the proteasome. Expressed in nervous system. In the developing nervous system, it is expressed in overlapping regions with deltaB (dlb) and deltaD (dld); in the neural plate, dla is expressed in patches of contiguous cells with dld, while dlb is confined to scattered cells within those patches that will differentiate as neurons. In 24 hours embryos, expressed in the hindbrain in stripes adjacent to rhombomere boundaries, but not in the actual boundary cells. During gastrulation and tail formation, expressed in embryonic midline cells. Expressed in hair cells of inner ear.

The protein localises to the membrane. Functionally, acts as a ligand for Notch receptors and is involved in primary neurogenesis. Can activate Notch receptors, thereby playing a key role in lateral inhibition, a process that prevents the immediate neighbors of each nascent neural cell from simultaneously embarking on neural differentiation. Required for boundary formation during segmentation of the hindbrain. Required for midline cell fate specification prior to germ layer formation; regulates specification of floorplate, notochord and hypochord. In inner ear, it prevents adjacent cells from adopting the same cell fate. Plays a role in angiogenesis. The polypeptide is Delta-like protein A (dla) (Danio rerio (Zebrafish)).